The sequence spans 1319 residues: DNA-directed RNA polymerase subunit beta' (1319 aa).

Residues cysteine 60, cysteine 62, cysteine 75, and cysteine 78 each contribute to the Zn(2+) site. Residues aspartate 535, aspartate 537, and aspartate 539 each contribute to the Mg(2+) site. The Zn(2+) site is built by cysteine 890, cysteine 971, cysteine 978, and cysteine 981.

Belongs to the RNA polymerase beta' chain family. As to quaternary structure, the RNAP catalytic core consists of 2 alpha, 1 beta, 1 beta' and 1 omega subunit. When a sigma factor is associated with the core the holoenzyme is formed, which can initiate transcription. Requires Mg(2+) as cofactor. Zn(2+) is required as a cofactor.

It carries out the reaction RNA(n) + a ribonucleoside 5'-triphosphate = RNA(n+1) + diphosphate. Functionally, DNA-dependent RNA polymerase catalyzes the transcription of DNA into RNA using the four ribonucleoside triphosphates as substrates. The chain is DNA-directed RNA polymerase subunit beta' from Mycobacteroides abscessus (strain ATCC 19977 / DSM 44196 / CCUG 20993 / CIP 104536 / JCM 13569 / NCTC 13031 / TMC 1543 / L948) (Mycobacterium abscessus).